Consider the following 266-residue polypeptide: Probable catechol O-methyltransferase 1 (266 aa).

S-adenosyl-L-methionine contacts are provided by I56, E78, S86, E106, V107, A135, and D162. Residue D162 participates in Mg(2+) binding. K165 provides a ligand contact to substrate. Mg(2+) contacts are provided by D190 and N191. N191 contributes to the substrate binding site.

It belongs to the class I-like SAM-binding methyltransferase superfamily. Cation-dependent O-methyltransferase family. The cofactor is Mg(2+).

It localises to the cytoplasm. It is found in the nucleus. The catalysed reaction is a catechol + S-adenosyl-L-methionine = a guaiacol + S-adenosyl-L-homocysteine + H(+). The protein is Probable catechol O-methyltransferase 1 of Schizosaccharomyces pombe (strain 972 / ATCC 24843) (Fission yeast).